Consider the following 544-residue polypeptide: Putative glycerol-3-phosphate transporter 4 (544 aa).

6 consecutive transmembrane segments (helical) span residues 28–47, 121–141, 156–176, 181–201, 218–238, and 240–260; these read TFRY…YHAS, VAFL…GDSL, FFVG…WFFL, AAGL…GNWF, SVGN…GWGW, and FIAP…FLAA. The interval 281–313 is disordered; the sequence is KRDVEEEEEEVEEDLGTDVEGDGEGSSGSGSGY. A compositionally biased stretch (acidic residues) spans 285 to 303; it reads EEEEEEVEEDLGTDVEGDG. 7 helical membrane passes run 319 to 339, 342 to 362, 371 to 391, 402 to 422, 428 to 448, 471 to 491, and 494 to 514; these read VGLL…CLFF, LVAY…TIGG, GNLS…CGYI, AAAF…YGGV, ILLM…ITTA, AIID…TGFL, and LGWQ…GLLL.

It belongs to the major facilitator superfamily. Organophosphate:Pi antiporter (OPA) (TC 2.A.1.4) family.

It is found in the membrane. The sequence is that of Putative glycerol-3-phosphate transporter 4 from Arabidopsis thaliana (Mouse-ear cress).